An 801-amino-acid chain; its full sequence is Squamosa promoter-binding-like protein 7 (801 aa).

Disordered stretches follow at residues 1–23 and 59–91; these read MSSL…LVND and SPPL…DRVR. Residues 135 to 212 form an SBP-type; atypical zinc finger; that stretch reads VARCQVPDCE…ERHNNRRKRK (78 aa). The Zn(2+) site is built by Cys138, Cys143, Cys160, Cys163, Cys179, Cys182, His186, and Cys198. A Bipartite nuclear localization signal motif is present at residues 195–211; that stretch reads KRSCRRKLERHNNRRKR. Basic residues predominate over residues 203-213; it reads ERHNNRRKRKP. Disordered regions lie at residues 203–258 and 286–313; these read ERHN…PSLI and GSGE…NKSA. Residues 222–233 are compositionally biased toward polar residues; sequence EQQQVLSQNDNS. Residues 249–258 show a composition bias toward basic and acidic residues; that stretch reads QRAEEEPSLI. Residues 304-313 are compositionally biased toward polar residues; the sequence is SPSNGDNKSA.

In terms of assembly, homodimer. Interacts with KIN17. Interacts with HY5. Zn(2+) serves as cofactor. In terms of tissue distribution, expressed in roots rosette leaves, cauline leaves, stems, flowers and siliques.

Its subcellular location is the nucleus speckle. Its function is as follows. Transcription factor that participates in reprogramming global gene expression during copper deficiency in order to improve the metal uptake and prioritize its distribution to copper proteins of major importance. Binds directly to 5'-GTAC-3' motifs in the microRNA (miRNA) promoter of the stress-responsive miRNAs miR398b and miR398c to activate their transcription. During copper deficiency, activates the copper transporters COPT1 and COPT2, and the copper chaperone CCH, directly or indirectly via miRNAs. Required for the expression of the miRNAs miR397, miR408 and miR857. Acts coordinately with HY5 to regulate miR408 and its target genes in response to changes in light and copper conditions. Activates miR857 and its target genes in response to low copper conditions. Involved in cadmium stress response by regulating miR397a, miR398b, miR398c and miR857. Required for iron homeostasis during copper deficiency. The polypeptide is Squamosa promoter-binding-like protein 7 (SPL7) (Arabidopsis thaliana (Mouse-ear cress)).